The chain runs to 149 residues: MKVLIVLLLGLAFVLADHHHHHHDYVVKTHEDLTNYRTQCVEKVHASEELVEKYKKWQYPDDAVTHCYLECIFQKFGFYDTEHGFDVHKIHIQLAGPGVEVHESDEVHQKIAHCAETHSKEGDSCSKAYHAGMCFMNSNLQLVQHSVKV.

The N-terminal stretch at 1–16 is a signal peptide; that stretch reads MKVLIVLLLGLAFVLA. Cystine bridges form between Cys40–Cys71, Cys67–Cys125, and Cys114–Cys134.

It belongs to the PBP/GOBP family. As to expression, expressed in adult olfactory system. Expressed in subsets of sensilla in both olfactory organs, the maxillary palps, and third antennal segments.

Its subcellular location is the secreted. Functionally, present in the aqueous fluid surrounding olfactory sensory dendrites and are thought to aid in the capture and transport of hydrophobic odorants into and through this fluid. This chain is General odorant-binding protein 99b (Obp99b), found in Drosophila melanogaster (Fruit fly).